Reading from the N-terminus, the 122-residue chain is Large ribosomal subunit protein uL14 (122 aa).

This sequence belongs to the universal ribosomal protein uL14 family. Part of the 50S ribosomal subunit. Forms a cluster with proteins L3 and L19. In the 70S ribosome, L14 and L19 interact and together make contacts with the 16S rRNA in bridges B5 and B8.

Its function is as follows. Binds to 23S rRNA. Forms part of two intersubunit bridges in the 70S ribosome. This chain is Large ribosomal subunit protein uL14, found in Cytophaga hutchinsonii (strain ATCC 33406 / DSM 1761 / CIP 103989 / NBRC 15051 / NCIMB 9469 / D465).